We begin with the raw amino-acid sequence, 309 residues long: tRNA-cytidine(32) 2-sulfurtransferase (309 aa).

A PP-loop motif motif is present at residues 47–52; the sequence is SGGKDS. [4Fe-4S] cluster contacts are provided by C122, C125, and C213.

It belongs to the TtcA family. In terms of assembly, homodimer. Requires Mg(2+) as cofactor. [4Fe-4S] cluster is required as a cofactor.

The protein localises to the cytoplasm. It carries out the reaction cytidine(32) in tRNA + S-sulfanyl-L-cysteinyl-[cysteine desulfurase] + AH2 + ATP = 2-thiocytidine(32) in tRNA + L-cysteinyl-[cysteine desulfurase] + A + AMP + diphosphate + H(+). The protein operates within tRNA modification. Functionally, catalyzes the ATP-dependent 2-thiolation of cytidine in position 32 of tRNA, to form 2-thiocytidine (s(2)C32). The sulfur atoms are provided by the cysteine/cysteine desulfurase (IscS) system. The polypeptide is tRNA-cytidine(32) 2-sulfurtransferase (Erwinia tasmaniensis (strain DSM 17950 / CFBP 7177 / CIP 109463 / NCPPB 4357 / Et1/99)).